A 701-amino-acid polypeptide reads, in one-letter code: Serologically defined colon cancer antigen 8 homolog (701 aa).

Over residues Met-1–Leu-13 the composition is skewed to acidic residues. Disordered stretches follow at residues Met-1–Ser-67 and Ala-84–Asn-114. The segment covering Ser-45–Ser-67 has biased composition (polar residues). Coiled-coil stretches lie at residues Ile-119 to Tyr-173, His-203 to Ala-258, and Gln-323 to Arg-695. Positions Leu-364–Glu-387 are disordered.

The protein resides in the cytoplasm. It is found in the cytoskeleton. It localises to the microtubule organizing center. Its subcellular location is the centrosome. The protein localises to the centriole. The protein resides in the cilium basal body. It is found in the cell junction. Its function is as follows. Plays a role in the establishment of cell polarity and epithelial lumen formation. Also plays an essential role in ciliogenesis and subsequent Hedgehog signaling pathway that requires the presence of intact primary cilia for pathway activation. Mechanistically, interacts with and mediates RABEP2 centrosomal localization which is critical for ciliogenesis. The sequence is that of Serologically defined colon cancer antigen 8 homolog (Sdccag8) from Danio rerio (Zebrafish).